The chain runs to 1163 residues: MKLCHAIFSTFVVFFVASGAGEKQGESQLQQIYDELSILSRVTNAIALQAAALSKTVKIREVITELLKVDNGNFSNLLSLDPAHLVKNLDELHKKSLQAVSGSNEQLQQDLKEMIAMNGLLAAVESENYTEKATVNSLIVLKKVDEKMEICDESLITIMFNISQAMSGVPFAESDEMKIFSSMKTMKKAFYKCISKFPAFMQKLYEYNYPLSGFLELNDTMNTIKALNELDIANKIPNMLQKFKTPFLNILAVGDHRNKGNTGKLLQSAITLFKKTVYSNSSTRLFLTAGFPESGDMKRVAKDLTSDWFKKKVSRGKSTAELETALKPFNQFAESMAHVFKSWNNFRDDFQTDSALLATIPDLLSQIDDYDRNVDKKKFLENFEATFRTCFKNYKNALDQGEETKFLKNFSAVYLLVRSVQAVEQWASEISTMFDEKAMDVYFEELEKLTPSNIKEQVEKITNFDDFLKIINKFTMLKSLQTQYESAYKTSNSSELSLSKIITDAGLVDTSKCLEKDKLDSSKLLKMLQFMQHMMQLDIDYSTLKANLDNFFELKKKMLETEKLVKGFTSRSARAASNSGSPVLKIKDSQKHADHLGNGLLAIKKMIISLKEKATILKSTMFNAKANQEIREKNPIDYIKEFWTNPGPSIEKLVSDLEKLEQSSKSYRKADLLTIRKVFEDGSKIVGIPEVFSYIDSQFEKKGSQYSNERKITQALSTLDLNFASHKGALSAASLSVDNLKLYFDDLFGLTPKVSVQSESTSPIVVVLICVAIVLVLVILAIVGYGFTSNGRNQYINLYLYYFGKTSDYEKRWRYSLFMDRVDGKNVLIDSVREINATNLLKAVKRGAYINVCNKYGNTALHVATRRGYQNLVEILIKHGADRSFLNPQNKTAEQMIPVNYQETHKEKIERFKSIESIYNKYRKKKFKLCVPEKFPVSSFHIYIEDRTDDNVTNEFTTKFQSITSDEAMITTTHVVVKTTEDGILETDDLNLLIWIFHGSIIVRDTWMVDCLRDEKLIEKDCDYLVEKVKYKGIIYDTVTQWSNAMAKATTPFLYGVHVALCMKNCPYLASLTAIIQGQGGTMLDKFPDKDAFNKGSHPYLHKNLGPIFLLHDGTGDLDLYRSDPDKMFTLFTEQQFMDLLFKREINKDTNPKIIPVLVDEED.

The ANK repeat unit spans residues 856–885; that stretch reads YGNTALHVATRRGYQNLVEILIKHGADRSF. A BRCT domain is found at 929 to 1025; that stretch reads LCVPEKFPVS…KLIEKDCDYL (97 aa).

This chain is Ankyrin repeat-containing protein F37A4.4, found in Caenorhabditis elegans.